Consider the following 446-residue polypeptide: Glutamate-1-semialdehyde 2,1-aminomutase (446 aa).

Residue K264 is modified to N6-(pyridoxal phosphate)lysine.

It belongs to the class-III pyridoxal-phosphate-dependent aminotransferase family. HemL subfamily. Pyridoxal 5'-phosphate serves as cofactor.

Its subcellular location is the cytoplasm. It carries out the reaction (S)-4-amino-5-oxopentanoate = 5-aminolevulinate. It functions in the pathway porphyrin-containing compound metabolism; protoporphyrin-IX biosynthesis; 5-aminolevulinate from L-glutamyl-tRNA(Glu): step 2/2. The polypeptide is Glutamate-1-semialdehyde 2,1-aminomutase (Natronomonas pharaonis (strain ATCC 35678 / DSM 2160 / CIP 103997 / JCM 8858 / NBRC 14720 / NCIMB 2260 / Gabara) (Halobacterium pharaonis)).